We begin with the raw amino-acid sequence, 301 residues long: GTPase Era (301 aa).

The Era-type G domain maps to 7–175 (YCGFIAIVGR…AGIVRKHLPE (169 aa)). A G1 region spans residues 15–22 (GRPNVGKS). 15–22 (GRPNVGKS) is a GTP binding site. Positions 41–45 (QTTRH) are G2. The interval 62 to 65 (DTPG) is G3. GTP contacts are provided by residues 62–66 (DTPGL) and 124–127 (NKVD). The interval 124 to 127 (NKVD) is G4. A G5 region spans residues 154 to 156 (ISA). The region spanning 206–283 (LGAELPYSVT…HLELWVKVKS (78 aa)) is the KH type-2 domain.

It belongs to the TRAFAC class TrmE-Era-EngA-EngB-Septin-like GTPase superfamily. Era GTPase family. As to quaternary structure, monomer.

The protein resides in the cytoplasm. The protein localises to the cell inner membrane. In terms of biological role, an essential GTPase that binds both GDP and GTP, with rapid nucleotide exchange. Plays a role in 16S rRNA processing and 30S ribosomal subunit biogenesis and possibly also in cell cycle regulation and energy metabolism. This chain is GTPase Era, found in Salmonella heidelberg (strain SL476).